We begin with the raw amino-acid sequence, 104 residues long: Zinc finger C2H2 protein ECU02_0310 (104 aa).

Residues 56 to 80 form a C2H2-type zinc finger; it reads FYCCECDRHFITEKVLMEHKRSNPH.

The protein belongs to the ZNF593/BUD20 C2H2-type zinc-finger protein family. In terms of assembly, associates with pre-60S ribosomal particles; released from the pre-60S particle very early in the cytoplasm.

Its subcellular location is the nucleus. The protein localises to the cytoplasm. Its function is as follows. Involved in pre-60S ribosomal particles maturation by promoting the nuclear export of the 60S ribosome. The protein is Zinc finger C2H2 protein ECU02_0310 of Encephalitozoon cuniculi (strain GB-M1) (Microsporidian parasite).